The sequence spans 308 residues: MSKTAIIFPGQGAQKVGMAQDLYNNNDQATEILTSAANTLDFDILETMFTDEEGKLGETENTQPALLTHSSALLAALKNLNPDFTMGHSLGEYSSLVAADVLSFEDAVKIVRKRGQLMAQAFPSGVGSMAAVLGLDFDKVDEICKSLSSDDKIIEPANINCPGQIVVSGHKALIDELVEKGKSLGAKRVMPLAVSGPFHSSLMKVIEEDFSSYINQFEWRDAKFPVVQNVNAQGETDKEVIKSNMVKQLYSPVQFINSTEWLIDQGVDHFIEIGPGKVLSGLIKKINRDVKLTSIQTLEDVKGWNEND.

Residues serine 89 and histidine 199 contribute to the active site.

This sequence belongs to the FabD family.

The catalysed reaction is holo-[ACP] + malonyl-CoA = malonyl-[ACP] + CoA. It functions in the pathway lipid metabolism; fatty acid biosynthesis. This chain is Malonyl CoA-acyl carrier protein transacylase (fabD), found in Staphylococcus aureus (strain MRSA252).